The primary structure comprises 304 residues: Recombination-associated protein RdgC (304 aa).

This sequence belongs to the RdgC family.

Its subcellular location is the cytoplasm. The protein localises to the nucleoid. Functionally, may be involved in recombination. This Shewanella oneidensis (strain ATCC 700550 / JCM 31522 / CIP 106686 / LMG 19005 / NCIMB 14063 / MR-1) protein is Recombination-associated protein RdgC.